Consider the following 210-residue polypeptide: Outer-membrane lipoprotein carrier protein (210 aa).

An N-terminal signal peptide occupies residues M1–A26.

It belongs to the LolA family. As to quaternary structure, monomer.

Its subcellular location is the periplasm. Functionally, participates in the translocation of lipoproteins from the inner membrane to the outer membrane. Only forms a complex with a lipoprotein if the residue after the N-terminal Cys is not an aspartate (The Asp acts as a targeting signal to indicate that the lipoprotein should stay in the inner membrane). This is Outer-membrane lipoprotein carrier protein from Bordetella pertussis (strain Tohama I / ATCC BAA-589 / NCTC 13251).